The primary structure comprises 436 residues: MEHVFAVDEIPDPLWAPPPPVQPAAAAGVDDVGAVSGGGLLERCPSGWNLERFLEELDGVPAPAASPDGAAIYPSPMPAAAAEAAARWSRGYGDREAVGVMPMPAAALPAAPASAAMDPVEYNAMLKRKLDEDLATVAMWRASGAIHSESPLGNKTSLSIVGSILSSQKCIEGNGILVQTKLSPGPNGGSGPYVNQNTDAHAKQATSGSSREPSPSEDDDMEGDAEAMGNMILDEEDKVKKRKESNRESARRSRSRKAARLKDLEEQVSLLRVENSSLLRRLADANQKYSAAAIDNRVLMADIEALRAKVRMAEESVKMVTGARQLHQAIPDMQSPLNVNSDASVPIQNNNPMNYFSNANNAGVNSFMHQVSPAFQIVDSVEKIDPTDPVQLQQQQMASLQHLQNRACGGGASSNEYTAWGSSLMDANELVNMELQ.

The tract at residues M1–A27 is required for transactivation activity. The tract at residues L182–A258 is disordered. Positions P215 to A225 are enriched in acidic residues. The bZIP domain maps to E236 to L299. Residues K238 to K257 are basic motif. The tract at residues L264–L278 is leucine-zipper.

As to quaternary structure, homodimer. Forms heterodimers with RISBZ2/BZP33 and RISBZ3/BZP20. Interacts with DOF3/RPBF. In terms of tissue distribution, specifically expressed in seeds. Expressed in aleurone and subaleurone layers of maturing seeds, but not in the embryo tissues.

The protein resides in the nucleus. Transcriptional activator that binds to the DNA specific sequence 5'-TGAGTCA-3' found in seed storage protein gene promoters. Involved in the endosperm-specific regulation of storage protein genes. Can activate the expression of genes encoding for the seed storage proteins glutelin, prolamin, globulin and the allergen RAG1. Functions synergistically with DOF3/RPBF to positively regulate quantitatively many seed storage protein genes. Functions synergistically with DOF3/RPBF to positively regulate some metabolic enzymes, such as alanine aminotransferase and pyruvate phosphate dikinase, that are expressed in developing seeds. Functions synergistically with DOF3/RPBF to positively regulate genes that are key players in the development of aleurone layers. Functions synergistically with DOF3/RPBF to positively regulate the glutelin GLUD-1 gene in endosperm of developing seeds. Can activate the expression of the bifunctional lysine-degrading enzyme, lysine ketoglutarate reductase/saccharopine dehydrogenase (LKR/SDH), one of the key regulators determining free lysine content in plants. Functions as a key regulator of starch synthesis in seeds, by direct binding to the promoters of starch-synthesizing genes, such as AGPL3, WAXXY and SBE1. This Oryza sativa subsp. japonica (Rice) protein is bZIP transcription factor RISBZ1.